The chain runs to 298 residues: ER-bound oxygenase mpaB (298 aa).

Topologically, residues 1 to 24 are lumenal; the sequence is MDKGTSFFTTPSFSATTRAIFNTM. The chain crosses the membrane as a helical span at residues 25-45; that stretch reads PQWFSFAVGLLIAYPLLINSL. The Cytoplasmic segment spans residues 46-298; sequence RYRRLKQLQK…RLRKAMLYVE (253 aa).

The protein belongs to the mpaB oxygenase family.

It is found in the endoplasmic reticulum membrane. It carries out the reaction 4-farnesyl-3,5-dihydroxy-6-methylphthalide + AH2 + 2 O2 = (4E,8E)-10-(4,6-dihydroxy-7-methyl-3-oxo-1,3-dihydro-2-benzofuran-5-yl)-4,8-dimethyldeca-4,8-dienoate + acetone + A + H2O + H(+). The protein operates within secondary metabolite biosynthesis; terpenoid biosynthesis. In terms of biological role, ER-bound oxygenase; part of the gene cluster that mediates the biosynthesis of mycophenolic acid (MPA), the first isolated antibiotic natural product in the world obtained from a culture of Penicillium brevicompactum in 1893. MpaB catalyzes the oxidative cleavage the C19-C20 double bond in farnesyl-DHMP (FDHMP) to yield FDHMP-3C via a mycophenolic aldehyde intermediate. The first step of the pathway is the synthesis of 5-methylorsellinic acid (5MOA) by the cytosolic polyketide synthase mpaC. 5MOA is then converted to the phthalide compound 5,7-dihydroxy-4,6-dimethylphthalide (DHMP) by the endoplasmic reticulum-bound cytochrome P450 monooxygenase mpaDE. MpaDE first catalyzes hydroxylation of 5-MOA to 4,6-dihydroxy-2-(hydroxymethyl)-3-methylbenzoic acid (DHMB). MpaDE then acts as a lactone synthase that catalyzes the ring closure to convert DHMB into DHMP. The next step is the prenylation of DHMP by the Golgi apparatus-associated prenyltransferase mpaA to yield farnesyl-DHMP (FDHMP). The ER-bound oxygenase mpaB then mediates the oxidative cleavage the C19-C20 double bond in FDHMP to yield FDHMP-3C via a mycophenolic aldehyde intermediate. The O-methyltransferase mpaG catalyzes the methylation of FDHMP-3C to yield MFDHMP-3C. After the cytosolic methylation of FDHMP-3C, MFDHMP-3C enters into peroxisomes probably via free diffusion due to its low molecular weight. Upon a peroxisomal CoA ligation reaction, catalyzed by a beta-oxidation component enzyme acyl-CoA ligase ACL891, MFDHMP-3C-CoA would then be restricted to peroxisomes for the following beta-oxidation pathway steps. The peroxisomal beta-oxidation machinery than converts MFDHMP-3C-CoA into MPA_CoA, via a beta-oxidation chain-shortening process. Finally mpaH acts as a peroxisomal acyl-CoA hydrolase with high substrate specificity toward MPA-CoA to release the final product MPA. The protein is ER-bound oxygenase mpaB of Penicillium roqueforti (strain FM164).